The primary structure comprises 457 residues: NADH-quinone oxidoreductase subunit N (457 aa).

14 helical membrane-spanning segments follow: residues 2–22 (NAII…FIGL), 25–45 (LIYP…ACTF), 60–80 (NYSV…FILF), 92–112 (GDHY…VSFS), 114–134 (MSML…LAGS), 149–169 (FILG…IYGA), 188–208 (FFIG…AVPF), 222–242 (FITA…FYLM), 253–273 (YLSH…NIAA), 283–303 (LAFS…ILTI), 310–330 (FVYL…VQVV), 353–373 (AFVL…AGFF), 382–402 (VIHA…LISV), and 431–451 (VILA…DILL).

This sequence belongs to the complex I subunit 2 family. NDH-1 is composed of 14 different subunits. Subunits NuoA, H, J, K, L, M, N constitute the membrane sector of the complex.

Its subcellular location is the cell inner membrane. The enzyme catalyses a quinone + NADH + 5 H(+)(in) = a quinol + NAD(+) + 4 H(+)(out). Its function is as follows. NDH-1 shuttles electrons from NADH, via FMN and iron-sulfur (Fe-S) centers, to quinones in the respiratory chain. The immediate electron acceptor for the enzyme in this species is believed to be a menaquinone. Couples the redox reaction to proton translocation (for every two electrons transferred, four hydrogen ions are translocated across the cytoplasmic membrane), and thus conserves the redox energy in a proton gradient. This chain is NADH-quinone oxidoreductase subunit N, found in Cytophaga hutchinsonii (strain ATCC 33406 / DSM 1761 / CIP 103989 / NBRC 15051 / NCIMB 9469 / D465).